Consider the following 263-residue polypeptide: Hydroxyethylthiazole kinase 1 (263 aa).

Residue Met42 coordinates substrate. The ATP site is built by Lys118 and Thr164. Substrate is bound at residue Gly191.

This sequence belongs to the Thz kinase family. Requires Mg(2+) as cofactor.

It catalyses the reaction 5-(2-hydroxyethyl)-4-methylthiazole + ATP = 4-methyl-5-(2-phosphooxyethyl)-thiazole + ADP + H(+). It participates in cofactor biosynthesis; thiamine diphosphate biosynthesis; 4-methyl-5-(2-phosphoethyl)-thiazole from 5-(2-hydroxyethyl)-4-methylthiazole: step 1/1. Functionally, catalyzes the phosphorylation of the hydroxyl group of 4-methyl-5-beta-hydroxyethylthiazole (THZ). The polypeptide is Hydroxyethylthiazole kinase 1 (Clostridium botulinum (strain Kyoto / Type A2)).